We begin with the raw amino-acid sequence, 305 residues long: tRNA-cytidine(32) 2-sulfurtransferase (305 aa).

Residues 1-20 (MTAVLPLPQPLADPAPRDPR) are disordered. The PP-loop motif motif lies at 59–64 (SGGKDS). [4Fe-4S] cluster contacts are provided by Cys134, Cys137, and Cys225. Over residues 282 to 293 (DAPSDVDPDPSA) the composition is skewed to low complexity. The interval 282–305 (DAPSDVDPDPSAWLSASHAPHDSD) is disordered.

This sequence belongs to the TtcA family. As to quaternary structure, homodimer. Mg(2+) is required as a cofactor. [4Fe-4S] cluster serves as cofactor.

The protein resides in the cytoplasm. It catalyses the reaction cytidine(32) in tRNA + S-sulfanyl-L-cysteinyl-[cysteine desulfurase] + AH2 + ATP = 2-thiocytidine(32) in tRNA + L-cysteinyl-[cysteine desulfurase] + A + AMP + diphosphate + H(+). It participates in tRNA modification. Functionally, catalyzes the ATP-dependent 2-thiolation of cytidine in position 32 of tRNA, to form 2-thiocytidine (s(2)C32). The sulfur atoms are provided by the cysteine/cysteine desulfurase (IscS) system. This Xanthomonas euvesicatoria pv. vesicatoria (strain 85-10) (Xanthomonas campestris pv. vesicatoria) protein is tRNA-cytidine(32) 2-sulfurtransferase.